Reading from the N-terminus, the 101-residue chain is Protein translation factor SUI1 homolog (101 aa).

It belongs to the SUI1 family.

This Methanoregula boonei (strain DSM 21154 / JCM 14090 / 6A8) protein is Protein translation factor SUI1 homolog.